A 187-amino-acid polypeptide reads, in one-letter code: Large ribosomal subunit protein bL25 (187 aa).

This sequence belongs to the bacterial ribosomal protein bL25 family. CTC subfamily. Part of the 50S ribosomal subunit; part of the 5S rRNA/L5/L18/L25 subcomplex. Contacts the 5S rRNA. Binds to the 5S rRNA independently of L5 and L18.

Functionally, this is one of the proteins that binds to the 5S RNA in the ribosome where it forms part of the central protuberance. This Tropheryma whipplei (strain Twist) (Whipple's bacillus) protein is Large ribosomal subunit protein bL25.